A 178-amino-acid chain; its full sequence is Protein GrpE (178 aa).

The interval 1–26 is disordered; it reads MQDQDKYAEQAASMEEPASADAPAIV.

This sequence belongs to the GrpE family. In terms of assembly, homodimer.

It is found in the cytoplasm. In terms of biological role, participates actively in the response to hyperosmotic and heat shock by preventing the aggregation of stress-denatured proteins, in association with DnaK and GrpE. It is the nucleotide exchange factor for DnaK and may function as a thermosensor. Unfolded proteins bind initially to DnaJ; upon interaction with the DnaJ-bound protein, DnaK hydrolyzes its bound ATP, resulting in the formation of a stable complex. GrpE releases ADP from DnaK; ATP binding to DnaK triggers the release of the substrate protein, thus completing the reaction cycle. Several rounds of ATP-dependent interactions between DnaJ, DnaK and GrpE are required for fully efficient folding. This is Protein GrpE from Herminiimonas arsenicoxydans.